Consider the following 407-residue polypeptide: Na(+)-translocating NADH-quinone reductase subunit F (407 aa).

Residues 6–26 traverse the membrane as a helical segment; that stretch reads IFLAIGMFTAIVLGLVAIILV. A 2Fe-2S ferredoxin-type domain is found at 35–127; the sequence is GDVTIQINGE…DMQIRVPEEV (93 aa). Positions 70, 76, 79, and 111 each coordinate [2Fe-2S] cluster. Residues 130–269 enclose the FAD-binding FR-type domain; it reads VKKWECTVES…YGPFGEFFAK (140 aa).

Belongs to the NqrF family. Composed of six subunits; NqrA, NqrB, NqrC, NqrD, NqrE and NqrF. The cofactor is [2Fe-2S] cluster. FAD serves as cofactor.

The protein localises to the cell inner membrane. The enzyme catalyses a ubiquinone + n Na(+)(in) + NADH + H(+) = a ubiquinol + n Na(+)(out) + NAD(+). NQR complex catalyzes the reduction of ubiquinone-1 to ubiquinol by two successive reactions, coupled with the transport of Na(+) ions from the cytoplasm to the periplasm. The first step is catalyzed by NqrF, which accepts electrons from NADH and reduces ubiquinone-1 to ubisemiquinone by a one-electron transfer pathway. In Pseudomonas paraeruginosa (strain DSM 24068 / PA7) (Pseudomonas aeruginosa (strain PA7)), this protein is Na(+)-translocating NADH-quinone reductase subunit F.